Here is a 332-residue protein sequence, read N- to C-terminus: MQTKARLPVDINAPSLQSPALGIDTHLLRGELRQHEPMKQHVSWRAGGHAAYFYQPADLEDLAVFLHFWPKDEPVMMIGLGSNFLVRDGGLPGVMIALHAKLNDLLLVEQEEDGGLIYAGAGVPCAKLARFASLHNLAGAEFLAGIPGTVGGALAMNAGCYGSETWERVERVKTIDRDGTLHERTPEDYRIGYRQVELHEVVPPDTSCSWFVGGWFRLRPGQQESSRQAVKALLGTRIKTQPLGFPSAGSVFRNPPGDYAARLVEQCGLKGFRIGDAMISTLHANFIINCGHATATEIETVINTVQDIVYKKTEIRLVTEVRIIGQHKGNEL.

In terms of domain architecture, FAD-binding PCMH-type spans 45 to 243 (RAGGHAAYFY…LGTRIKTQPL (199 aa)). The active site involves Arg-194. Catalysis depends on Ser-250, which acts as the Proton donor. Glu-320 is a catalytic residue.

This sequence belongs to the MurB family. FAD serves as cofactor.

The protein resides in the cytoplasm. It catalyses the reaction UDP-N-acetyl-alpha-D-muramate + NADP(+) = UDP-N-acetyl-3-O-(1-carboxyvinyl)-alpha-D-glucosamine + NADPH + H(+). Its pathway is cell wall biogenesis; peptidoglycan biosynthesis. Its function is as follows. Cell wall formation. The polypeptide is UDP-N-acetylenolpyruvoylglucosamine reductase (Nitrosomonas eutropha (strain DSM 101675 / C91 / Nm57)).